Consider the following 258-residue polypeptide: 5'-nucleotidase SurE (258 aa).

A divalent metal cation is bound by residues D10, D11, S41, and N96.

This sequence belongs to the SurE nucleotidase family. The cofactor is a divalent metal cation.

It is found in the cytoplasm. It carries out the reaction a ribonucleoside 5'-phosphate + H2O = a ribonucleoside + phosphate. Functionally, nucleotidase that shows phosphatase activity on nucleoside 5'-monophosphates. The protein is 5'-nucleotidase SurE of Sorangium cellulosum (strain So ce56) (Polyangium cellulosum (strain So ce56)).